The primary structure comprises 195 residues: MKLIIGIGGVTNGGKTTLTNSLLKALPNCCVIHQDDFFKPQDQIAVGEDGFKQWDVLESLDMETMLSTVQAWVKDPHKFARAHGVSLQSGASDTHVLLLEGFLLYSYRPLVDLYSQRYFLTVPYEECKRRRRSRTYMVPDPPGLFDGHVWPMYQKYRREMEQDGVEVVYLDGMKSPEGLFHQVLEDIQNRLLNTS.

9–17 is a binding site for ATP; sequence GVTNGGKTT. Positions 16 and 35 each coordinate Mg(2+). The active-site Proton acceptor is the aspartate 35. Substrate contacts are provided by residues 35–38 and 54–55; these read DDFF and WD. Arginine 130 serves as a coordination point for ATP. Substrate is bound by residues arginine 131 and 136–137; that span reads YM. ATP is bound by residues 134-136 and 174-176; these read RTY and KSP.

It belongs to the uridine kinase family. NRK subfamily. As to quaternary structure, monomer. Interacts with ITGB1 alone or when associated with alpha-7, but not with alpha-5. As to expression, expressed in skeletal muscle (at protein level).

It catalyses the reaction beta-nicotinamide D-riboside + ATP = beta-nicotinamide D-ribonucleotide + ADP + H(+). It carries out the reaction beta-D-ribosylnicotinate + ATP = nicotinate beta-D-ribonucleotide + ADP + H(+). It functions in the pathway cofactor biosynthesis; NAD(+) biosynthesis. Its function is as follows. Catalyzes the phosphorylation of nicotinamide riboside (NR) and nicotinic acid riboside (NaR) to form nicotinamide mononucleotide (NMN) and nicotinic acid mononucleotide (NaMN). Reduces laminin matrix deposition and cell adhesion to laminin, but not to fibronectin. Involved in the regulation of PXN at the protein level and of PXN tyrosine phosphorylation. May play a role in the regulation of terminal myogenesis. The protein is Nicotinamide riboside kinase 2 (Nmrk2) of Mus musculus (Mouse).